We begin with the raw amino-acid sequence, 344 residues long: Dihydroorotase (344 aa).

Positions 13 and 15 each coordinate Zn(2+). Substrate is bound by residues 15–17 (HLR) and N41. 3 residues coordinate Zn(2+): K99, H136, and H174. Position 99 is an N6-carboxylysine (K99). Residue H136 coordinates substrate. L219 is a substrate binding site. D247 contacts Zn(2+). Residue D247 is part of the active site. Substrate contacts are provided by H251 and A263.

It belongs to the metallo-dependent hydrolases superfamily. DHOase family. Class II DHOase subfamily. As to quaternary structure, homodimer. Zn(2+) is required as a cofactor.

The enzyme catalyses (S)-dihydroorotate + H2O = N-carbamoyl-L-aspartate + H(+). The protein operates within pyrimidine metabolism; UMP biosynthesis via de novo pathway; (S)-dihydroorotate from bicarbonate: step 3/3. In terms of biological role, catalyzes the reversible cyclization of carbamoyl aspartate to dihydroorotate. This Microcystis aeruginosa (strain NIES-843 / IAM M-2473) protein is Dihydroorotase.